Reading from the N-terminus, the 899-residue chain is AP-3 complex subunit delta (899 aa).

HEAT repeat units follow at residues 37–74 (QSPEQLHEFLTRVLSECREEVKHADFNMKTNAVLKLTY), 155–192 (ELARDICEDLFLMLHSTKPYIRKKAVTALFKVFLQYPE), 194–229 (LRDNFEKFVDRLEDDDLSVVSATVSVICELSKHNPQ), 231–267 (FIQLSPILYQMLIKVDNNWVIIRLLKLFTNLAQIEPK), 268–305 (LRVKILPNVLELMDSTTAISVVYESINCIVKGNMLNSD), 308–344 (DSAVACLDKLHDFCTSNDPNLRYLSCVLFYKIGKINT), 345–382 (DFIANFDVLILRLLVDVDVSIRSKTLELLEGIVTEDNL), 384–428 (DFVQ…ITAM), 480–518 (RTLAQIVQLVKSEDITARLPGVLKECIWCLGEYSSLLDN), 536–580 (ELQQ…LIIS), 590–613 (SEALEFLRLCLDSLSEDASDSLPL), and 614–656 (LLTE…TESE). 4 disordered regions span residues 668–701 (DGIVSPDVSDTESDSEMYVPGAAPKDKGSSPTHE), 741–768 (NLSNSKPSSSGSLVRLSSESKAKEKKKK), 782–801 (GVNTADVTDDRPSNTPSARN), and 849–899 (AAEE…LTTE). The segment covering 743–759 (SNSKPSSSGSLVRLSSE) has biased composition (low complexity). Residues 841–862 (QRLLDESAAAEEEVVVVKKKKR) adopt a coiled-coil conformation. Over residues 857–880 (VKKKKRSKDGSKSSKKKSRSKSKP) the composition is skewed to basic residues.

It belongs to the adaptor complexes large subunit family. Adaptor protein complex 3 (AP-3) is a heterotetramer composed of 2 large adaptins (APL5 and APL6), a medium adaptin (APM3) and a small adaptin (APS3).

It localises to the golgi apparatus. It is found in the cytoplasmic vesicle. The protein resides in the clathrin-coated vesicle membrane. Its function is as follows. Part of the AP-3 complex, an adaptor-related complex which is not clathrin-associated. The complex is associated with the Golgi region as well as more peripheral structures. It facilitates the budding of vesicles from the Golgi membrane and may be directly involved in trafficking to the vacuole. The chain is AP-3 complex subunit delta (APL5) from Eremothecium gossypii (strain ATCC 10895 / CBS 109.51 / FGSC 9923 / NRRL Y-1056) (Yeast).